The sequence spans 554 residues: Dihydroxy-acid dehydratase (554 aa).

Asp78 serves as a coordination point for Mg(2+). Cys119 provides a ligand contact to [2Fe-2S] cluster. Mg(2+)-binding residues include Asp120 and Lys121. Residue Lys121 is modified to N6-carboxylysine. Cys191 contacts [2Fe-2S] cluster. Position 444 (Glu444) interacts with Mg(2+). Residue Ser470 is the Proton acceptor of the active site.

The protein belongs to the IlvD/Edd family. As to quaternary structure, homodimer. The cofactor is [2Fe-2S] cluster. Mg(2+) is required as a cofactor.

The enzyme catalyses (2R)-2,3-dihydroxy-3-methylbutanoate = 3-methyl-2-oxobutanoate + H2O. It carries out the reaction (2R,3R)-2,3-dihydroxy-3-methylpentanoate = (S)-3-methyl-2-oxopentanoate + H2O. The protein operates within amino-acid biosynthesis; L-isoleucine biosynthesis; L-isoleucine from 2-oxobutanoate: step 3/4. It functions in the pathway amino-acid biosynthesis; L-valine biosynthesis; L-valine from pyruvate: step 3/4. In terms of biological role, functions in the biosynthesis of branched-chain amino acids. Catalyzes the dehydration of (2R,3R)-2,3-dihydroxy-3-methylpentanoate (2,3-dihydroxy-3-methylvalerate) into 2-oxo-3-methylpentanoate (2-oxo-3-methylvalerate) and of (2R)-2,3-dihydroxy-3-methylbutanoate (2,3-dihydroxyisovalerate) into 2-oxo-3-methylbutanoate (2-oxoisovalerate), the penultimate precursor to L-isoleucine and L-valine, respectively. In Nitratidesulfovibrio vulgaris (strain DP4) (Desulfovibrio vulgaris), this protein is Dihydroxy-acid dehydratase.